We begin with the raw amino-acid sequence, 389 residues long: Lipid-A-disaccharide synthase (389 aa).

Belongs to the LpxB family.

It catalyses the reaction a lipid X + a UDP-2-N,3-O-bis[(3R)-3-hydroxyacyl]-alpha-D-glucosamine = a lipid A disaccharide + UDP + H(+). Its pathway is bacterial outer membrane biogenesis; LPS lipid A biosynthesis. Functionally, condensation of UDP-2,3-diacylglucosamine and 2,3-diacylglucosamine-1-phosphate to form lipid A disaccharide, a precursor of lipid A, a phosphorylated glycolipid that anchors the lipopolysaccharide to the outer membrane of the cell. This Albidiferax ferrireducens (strain ATCC BAA-621 / DSM 15236 / T118) (Rhodoferax ferrireducens) protein is Lipid-A-disaccharide synthase.